A 316-amino-acid polypeptide reads, in one-letter code: ATP synthase gamma chain (316 aa).

Belongs to the ATPase gamma chain family. As to quaternary structure, F-type ATPases have 2 components, CF(1) - the catalytic core - and CF(0) - the membrane proton channel. CF(1) has five subunits: alpha(3), beta(3), gamma(1), delta(1), epsilon(1). CF(0) has three main subunits: a, b and c.

It is found in the cellular thylakoid membrane. Its function is as follows. Produces ATP from ADP in the presence of a proton gradient across the membrane. The gamma chain is believed to be important in regulating ATPase activity and the flow of protons through the CF(0) complex. The sequence is that of ATP synthase gamma chain from Prochlorococcus marinus subsp. pastoris (strain CCMP1986 / NIES-2087 / MED4).